A 293-amino-acid polypeptide reads, in one-letter code: tRNA pseudouridine synthase B (293 aa).

Asp40 (nucleophile) is an active-site residue.

This sequence belongs to the pseudouridine synthase TruB family. Type 1 subfamily.

The catalysed reaction is uridine(55) in tRNA = pseudouridine(55) in tRNA. Responsible for synthesis of pseudouridine from uracil-55 in the psi GC loop of transfer RNAs. This is tRNA pseudouridine synthase B from Mycolicibacterium paratuberculosis (strain ATCC BAA-968 / K-10) (Mycobacterium paratuberculosis).